The sequence spans 73 residues: Defensin-like protein 87 (73 aa).

The first 27 residues, 1–27 (MTTKKTSSVVLPLLLVFALILMPMVAG), serve as a signal peptide directing secretion. 3 disulfide bridges follow: cysteine 33–cysteine 71, cysteine 45–cysteine 69, and cysteine 49–cysteine 70.

Belongs to the DEFL family.

It localises to the secreted. This Arabidopsis thaliana (Mouse-ear cress) protein is Defensin-like protein 87.